A 790-amino-acid chain; its full sequence is GATOR2 complex protein WDR24 (790 aa).

6 WD repeats span residues 72 to 112 (SLNL…RNKQ), 118 to 158 (EHKR…SVST), 161 to 201 (GQSE…RCER), 205 to 245 (AHNG…AKEM), 249 to 291 (QTIA…VPAA), and 295 to 338 (EHRD…VERA). Phosphoserine; by AMPK is present on serine 155. Phosphoserine occurs at positions 470 and 496. Threonine 581 is modified (phosphothreonine). 2 positions are modified to phosphoserine: serine 594 and serine 598. The C4-type zinc-finger motif lies at 718 to 740 (NCSHCKRPMSSRGWVCDRCHRCA). Residues cysteine 719, cysteine 722, cysteine 733, cysteine 736, cysteine 743, cysteine 746, cysteine 757, cysteine 760, histidine 762, histidine 765, histidine 768, cysteine 779, cysteine 783, histidine 785, and cysteine 787 each contribute to the Zn(2+) site. The segment at 741-790 (SMCAVCHHVVKGLFVWCQGCSHGGHLQHIMKWLEGSSHCPAGCGHLCEYS) adopts an RING-type; atypical zinc-finger fold.

This sequence belongs to the WD repeat WDR24 family. As to quaternary structure, component of the GATOR2 subcomplex, composed of MIOS, SEC13, SEH1L, WDR24 and WDR59. The GATOR2 complex interacts with CASTOR1 and CASTOR2; the interaction is negatively regulated by arginine. The GATOR2 complex interacts with SESN1, SESN2 and SESN3; the interaction is negatively regulated by amino acids. SESN1, SESN2 and SESN3 convey leucine availability via direct interaction with SEH1L and WDR24. Phosphorylation at Ser-155 by AMPK in response to glucose deprivation inactivates WDR24 by promoting interaction with 14-3-3 proteins, such as YWHAG, preventing assembly of the GATOR2 complex. In terms of processing, autoubiquitinated; MIOS is required to prevent autoubiquitination.

It localises to the lysosome membrane. The enzyme catalyses S-ubiquitinyl-[E2 ubiquitin-conjugating enzyme]-L-cysteine + [acceptor protein]-L-lysine = [E2 ubiquitin-conjugating enzyme]-L-cysteine + N(6)-ubiquitinyl-[acceptor protein]-L-lysine.. It functions in the pathway protein modification; protein ubiquitination. Its activity is regulated as follows. The GATOR2 complex is negatively regulated by the upstream amino acid sensors CASTOR1 and SESN2, which sequester the GATOR2 complex in absence of amino acids. In the presence of abundant amino acids, GATOR2 is released from CASTOR1 and SESN2 and activated. Its function is as follows. Catalytic component of the GATOR2 complex, a multiprotein complex that acts as an activator of the amino acid-sensing branch of the mTORC1 signaling pathway. The GATOR2 complex indirectly activates mTORC1 through the inhibition of the GATOR1 subcomplex. GATOR2 probably acts as an E3 ubiquitin-protein ligase toward GATOR1. In the presence of abundant amino acids, the GATOR2 complex mediates ubiquitination of the NPRL2 core component of the GATOR1 complex, leading to GATOR1 inactivation. In the absence of amino acids, GATOR2 is inhibited, activating the GATOR1 complex. In addition to its role in regulation of the mTORC1 complex, promotes the acidification of lysosomes and facilitates autophagic flux. Within the GATOR2 complex, WDR24 constitutes the catalytic subunit that mediates 'Lys-6'-linked ubiquitination of NPRL2. In Homo sapiens (Human), this protein is GATOR2 complex protein WDR24.